The sequence spans 100 residues: MAKKSLIAREKKRKKLEEKFYLIRRYPTKEMSKGGSLSESWEIQGKLEALPRNSAPTRLHRRCFLTGRPRANVRDFGLSGHILREMVHICLLPGATRSSW.

This sequence belongs to the universal ribosomal protein uS14 family. Part of the 30S ribosomal subunit.

It is found in the plastid. Its subcellular location is the chloroplast. Its function is as follows. Binds 16S rRNA, required for the assembly of 30S particles. This Pisum sativum (Garden pea) protein is Small ribosomal subunit protein uS14c.